We begin with the raw amino-acid sequence, 438 residues long: Histidinol dehydrogenase (438 aa).

Residues Tyr-138, Gln-199, and Asn-222 each coordinate NAD(+). Positions 245, 267, and 270 each coordinate substrate. Residues Gln-267 and His-270 each coordinate Zn(2+). Catalysis depends on proton acceptor residues Glu-335 and His-336. 4 residues coordinate substrate: His-336, Asp-369, Glu-423, and His-428. Asp-369 lines the Zn(2+) pocket. Position 428 (His-428) interacts with Zn(2+).

The protein belongs to the histidinol dehydrogenase family. It depends on Zn(2+) as a cofactor.

The catalysed reaction is L-histidinol + 2 NAD(+) + H2O = L-histidine + 2 NADH + 3 H(+). The protein operates within amino-acid biosynthesis; L-histidine biosynthesis; L-histidine from 5-phospho-alpha-D-ribose 1-diphosphate: step 9/9. Its function is as follows. Catalyzes the sequential NAD-dependent oxidations of L-histidinol to L-histidinaldehyde and then to L-histidine. In Burkholderia lata (strain ATCC 17760 / DSM 23089 / LMG 22485 / NCIMB 9086 / R18194 / 383), this protein is Histidinol dehydrogenase.